A 264-amino-acid chain; its full sequence is 5'-nucleotidase SurE (264 aa).

A divalent metal cation contacts are provided by Asp12, Asp13, Ser43, and Asn98.

This sequence belongs to the SurE nucleotidase family. A divalent metal cation serves as cofactor.

The protein localises to the cytoplasm. It carries out the reaction a ribonucleoside 5'-phosphate + H2O = a ribonucleoside + phosphate. Nucleotidase that shows phosphatase activity on nucleoside 5'-monophosphates. This Sulfurovum sp. (strain NBC37-1) protein is 5'-nucleotidase SurE.